The chain runs to 375 residues: Serpin B5 (375 aa).

Asn-99, Asn-133, Asn-188, Asn-298, and Asn-361 each carry an N-linked (GlcNAc...) asparagine glycan.

Belongs to the serpin family. Ov-serpin subfamily. Interacts with IRF6.

The protein resides in the secreted. It is found in the extracellular space. Its function is as follows. Tumor suppressor. It blocks the growth, invasion, and metastatic properties of mammary tumors. As it does not undergo the S (stressed) to R (relaxed) conformational transition characteristic of active serpins, it exhibits no serine protease inhibitory activity. The polypeptide is Serpin B5 (Serpinb5) (Rattus norvegicus (Rat)).